Consider the following 153-residue polypeptide: Small ribosomal subunit protein uS19A (153 aa).

This sequence belongs to the universal ribosomal protein uS19 family. As to quaternary structure, component of the small ribosomal subunit (SSU). Mature yeast ribosomes consist of a small (40S) and a large (60S) subunit. The 40S small subunit contains 1 molecule of ribosomal RNA (18S rRNA) and at least 33 different proteins. The large 60S subunit contains 3 rRNA molecules (25S, 5.8S and 5S rRNA) and at least 46 different proteins.

It localises to the cytoplasm. The protein localises to the nucleus. Its subcellular location is the nucleolus. Functionally, component of the ribosome, a large ribonucleoprotein complex responsible for the synthesis of proteins in the cell. The small ribosomal subunit (SSU) binds messenger RNAs (mRNAs) and translates the encoded message by selecting cognate aminoacyl-transfer RNA (tRNA) molecules. The large subunit (LSU) contains the ribosomal catalytic site termed the peptidyl transferase center (PTC), which catalyzes the formation of peptide bonds, thereby polymerizing the amino acids delivered by tRNAs into a polypeptide chain. The nascent polypeptides leave the ribosome through a tunnel in the LSU and interact with protein factors that function in enzymatic processing, targeting, and the membrane insertion of nascent chains at the exit of the ribosomal tunnel. uS19 is involved in the nuclear export of the small ribosomal subunit precursor. Has a role in the late stage of the assembly of pre-40S particles within the nucleus and controls their export to the cytoplasm. The protein is Small ribosomal subunit protein uS19A (rps1501) of Schizosaccharomyces pombe (strain 972 / ATCC 24843) (Fission yeast).